Reading from the N-terminus, the 754-residue chain is DNA topoisomerase 4 subunit A (754 aa).

In terms of domain architecture, Topo IIA-type catalytic spans 38-501; sequence LPHIGDGLKP…EARALSETEL (464 aa). Y127 functions as the O-(5'-phospho-DNA)-tyrosine intermediate in the catalytic mechanism.

It belongs to the type II topoisomerase GyrA/ParC subunit family. ParC type 1 subfamily. In terms of assembly, heterotetramer composed of ParC and ParE.

It is found in the cell membrane. The catalysed reaction is ATP-dependent breakage, passage and rejoining of double-stranded DNA.. Functionally, topoisomerase IV is essential for chromosome segregation. It relaxes supercoiled DNA. Performs the decatenation events required during the replication of a circular DNA molecule. The sequence is that of DNA topoisomerase 4 subunit A from Pseudomonas aeruginosa (strain ATCC 15692 / DSM 22644 / CIP 104116 / JCM 14847 / LMG 12228 / 1C / PRS 101 / PAO1).